An 88-amino-acid polypeptide reads, in one-letter code: Small ribosomal subunit protein uS15 (88 aa).

It belongs to the universal ribosomal protein uS15 family. As to quaternary structure, part of the 30S ribosomal subunit. Forms a bridge to the 50S subunit in the 70S ribosome, contacting the 23S rRNA.

Functionally, one of the primary rRNA binding proteins, it binds directly to 16S rRNA where it helps nucleate assembly of the platform of the 30S subunit by binding and bridging several RNA helices of the 16S rRNA. In terms of biological role, forms an intersubunit bridge (bridge B4) with the 23S rRNA of the 50S subunit in the ribosome. The polypeptide is Small ribosomal subunit protein uS15 (Paracidovorax citrulli (strain AAC00-1) (Acidovorax citrulli)).